The primary structure comprises 633 residues: Probable potassium transport system protein Kup 3 (633 aa).

12 helical membrane-spanning segments follow: residues 24 to 44, 61 to 81, 114 to 134, 148 to 168, 180 to 200, 222 to 242, 258 to 278, 298 to 318, 348 to 368, 377 to 397, 405 to 425, and 427 to 447; these read LVLA…LYAF, VLGI…LKYV, LVLG…TPAI, PALS…LFFV, FGPV…IHIF, IGSA…AEAL, WFSL…AFVL, IPMV…VISG, IFMP…VLFF, AYGI…FIVM, LTAA…FLAA, and IAKF…MALI.

The protein belongs to the HAK/KUP transporter (TC 2.A.72) family.

Its subcellular location is the cell inner membrane. It carries out the reaction K(+)(in) + H(+)(in) = K(+)(out) + H(+)(out). In terms of biological role, transport of potassium into the cell. Likely operates as a K(+):H(+) symporter. The polypeptide is Probable potassium transport system protein Kup 3 (Rhizobium johnstonii (strain DSM 114642 / LMG 32736 / 3841) (Rhizobium leguminosarum bv. viciae)).